The sequence spans 388 residues: 1-deoxy-D-xylulose 5-phosphate reductoisomerase (388 aa).

Threonine 10, glycine 11, threonine 12, isoleucine 13, arginine 37, glutamine 38, and asparagine 122 together coordinate NADPH. Residue lysine 123 participates in 1-deoxy-D-xylulose 5-phosphate binding. Glutamate 124 is a binding site for NADPH. Mn(2+) is bound at residue aspartate 148. Residues serine 149, glutamate 150, serine 179, and histidine 202 each contribute to the 1-deoxy-D-xylulose 5-phosphate site. Position 150 (glutamate 150) interacts with Mn(2+). Glycine 208 is a binding site for NADPH. Residues serine 215, asparagine 220, lysine 221, and glutamate 224 each coordinate 1-deoxy-D-xylulose 5-phosphate. Glutamate 224 is a Mn(2+) binding site.

This sequence belongs to the DXR family. It depends on Mg(2+) as a cofactor. Mn(2+) serves as cofactor.

The catalysed reaction is 2-C-methyl-D-erythritol 4-phosphate + NADP(+) = 1-deoxy-D-xylulose 5-phosphate + NADPH + H(+). The protein operates within isoprenoid biosynthesis; isopentenyl diphosphate biosynthesis via DXP pathway; isopentenyl diphosphate from 1-deoxy-D-xylulose 5-phosphate: step 1/6. Functionally, catalyzes the NADPH-dependent rearrangement and reduction of 1-deoxy-D-xylulose-5-phosphate (DXP) to 2-C-methyl-D-erythritol 4-phosphate (MEP). The polypeptide is 1-deoxy-D-xylulose 5-phosphate reductoisomerase (Laribacter hongkongensis (strain HLHK9)).